The following is a 297-amino-acid chain: MLRLGSHVSMSGKKMLLGASEEAASYGSNTFMIYTGAPQNTRRKPIEELNIEAGLEHMKAHDMADIVVHAPYIINIGNSVKPETFELGVNFLQSEIERTRALGAKQIVLHPGAHVGEGADKGIKQIIQGLNEALIHDQDVQIALETMAGKGSECGRTFEELAQIIDGVTHNELLSVTFDTCHTHDAGYDIVNDFDGVLNEFDKIIGIDRLKVLHINDSKNERGAHKDRHANIGFGHIGFDALHYIVHHPQLSNIPKILETPYVGEDKASKKAPYKWEIAMLRNGEFDPDLLNKIQNS.

Residues His-69, His-110, Glu-145, Asp-179, His-182, His-214, Asp-227, His-229, and Glu-259 each contribute to the Zn(2+) site.

Belongs to the AP endonuclease 2 family. Zn(2+) is required as a cofactor.

It carries out the reaction Endonucleolytic cleavage to 5'-phosphooligonucleotide end-products.. In terms of biological role, endonuclease IV plays a role in DNA repair. It cleaves phosphodiester bonds at apurinic or apyrimidinic (AP) sites, generating a 3'-hydroxyl group and a 5'-terminal sugar phosphate. This is Probable endonuclease 4 from Listeria innocua serovar 6a (strain ATCC BAA-680 / CLIP 11262).